The following is a 237-amino-acid chain: NAD(P)H-hydrate epimerase (237 aa).

A YjeF N-terminal domain is found at 11–223 (AASLDRDLMN…GLDIPEYPGV (213 aa)). 61-65 (NNGGD) contributes to the (6S)-NADPHX binding site. K(+) is bound by residues asparagine 62 and aspartate 123. Residues 127-133 (GFSFSGP) and aspartate 156 contribute to the (6S)-NADPHX site. Residue serine 159 participates in K(+) binding.

Belongs to the NnrE/AIBP family. Requires K(+) as cofactor.

It localises to the cytoplasm. It is found in the mitochondrion. The catalysed reaction is (6R)-NADHX = (6S)-NADHX. The enzyme catalyses (6R)-NADPHX = (6S)-NADPHX. Functionally, catalyzes the epimerization of the S- and R-forms of NAD(P)HX, a damaged form of NAD(P)H that is a result of enzymatic or heat-dependent hydration. This is a prerequisite for the S-specific NAD(P)H-hydrate dehydratase to allow the repair of both epimers of NAD(P)HX. The polypeptide is NAD(P)H-hydrate epimerase (Ajellomyces capsulatus (strain G186AR / H82 / ATCC MYA-2454 / RMSCC 2432) (Darling's disease fungus)).